We begin with the raw amino-acid sequence, 331 residues long: 6-phosphogluconolactonase (331 aa).

This sequence belongs to the cycloisomerase 2 family.

It carries out the reaction 6-phospho-D-glucono-1,5-lactone + H2O = 6-phospho-D-gluconate + H(+). Its pathway is carbohydrate degradation; pentose phosphate pathway; D-ribulose 5-phosphate from D-glucose 6-phosphate (oxidative stage): step 2/3. Catalyzes the hydrolysis of 6-phosphogluconolactone to 6-phosphogluconate. This Salmonella arizonae (strain ATCC BAA-731 / CDC346-86 / RSK2980) protein is 6-phosphogluconolactonase.